The sequence spans 313 residues: GTP cyclohydrolase MptA (313 aa).

Belongs to the GTP cyclohydrolase IV family. In terms of assembly, homodimer. Fe(2+) is required as a cofactor.

It carries out the reaction GTP + H2O = 7,8-dihydroneopterin 2',3'-cyclic phosphate + formate + diphosphate + H(+). The protein operates within cofactor biosynthesis; 5,6,7,8-tetrahydromethanopterin biosynthesis. With respect to regulation, inhibited by GTP concentrations greater than 0.3 mM and by 2-amino-5-formylamino-6-ribofuranosylamino-4(3H)-pyrimidinone 5'-phosphate (fapyGMP). Partial inhibition is observed when 2 mM GMP, dGTP, or 7-methyl-GTP was included along with 2 mM GTP. Its function is as follows. Converts GTP to 7,8-dihydro-D-neopterin 2',3'-cyclic phosphate, the first intermediate in the biosynthesis of coenzyme methanopterin. It is also able to utilize a variety of GTP analogs as substrates, including GDP, beta,gamma-methylene-GTP and GTP-[gamma-thio]. The chain is GTP cyclohydrolase MptA (mptA) from Methanocaldococcus jannaschii (strain ATCC 43067 / DSM 2661 / JAL-1 / JCM 10045 / NBRC 100440) (Methanococcus jannaschii).